Here is a 1229-residue protein sequence, read N- to C-terminus: DNA-directed RNA polymerase subunit beta (1229 aa).

It belongs to the RNA polymerase beta chain family. As to quaternary structure, the RNAP catalytic core consists of 2 alpha, 1 beta, 1 beta' and 1 omega subunit. When a sigma factor is associated with the core the holoenzyme is formed, which can initiate transcription.

The enzyme catalyses RNA(n) + a ribonucleoside 5'-triphosphate = RNA(n+1) + diphosphate. Functionally, DNA-dependent RNA polymerase catalyzes the transcription of DNA into RNA using the four ribonucleoside triphosphates as substrates. The protein is DNA-directed RNA polymerase subunit beta of Roseiflexus sp. (strain RS-1).